Consider the following 89-residue polypeptide: MFGFSFRQRKPSSAQTAKERLQILLAHERSSGGSNPDFLPLLQRDILEVVRRHMEIDSDAVDVKLERSDDLSSLEINIELPYAKQLKRA.

Belongs to the MinE family.

Prevents the cell division inhibition by proteins MinC and MinD at internal division sites while permitting inhibition at polar sites. This ensures cell division at the proper site by restricting the formation of a division septum at the midpoint of the long axis of the cell. The protein is Cell division topological specificity factor of Paracoccus denitrificans (strain Pd 1222).